We begin with the raw amino-acid sequence, 209 residues long: MSKGILGKKVGMTQVFAENGDVIPVTVIEAAPNVVLQKKTVDSDGYEAVQLGFDDQKQNNANKPEKGHAAKAETAPKRFIKEIRGVNLDEFEVGQEIKVDAFAEGDIVDVTGTSKGKGFAGAIKRHNQARGPMSHGSRYHRRPGSMGPVDPNRVFKGKALPGRMGGEQVTVQNLEIIKVDAERNLLLVKGNVPGAKKSYVTVRSAIKSK.

A disordered region spans residues 128-152 (QARGPMSHGSRYHRRPGSMGPVDPN).

Belongs to the universal ribosomal protein uL3 family. As to quaternary structure, part of the 50S ribosomal subunit. Forms a cluster with proteins L14 and L19.

Its function is as follows. One of the primary rRNA binding proteins, it binds directly near the 3'-end of the 23S rRNA, where it nucleates assembly of the 50S subunit. The sequence is that of Large ribosomal subunit protein uL3 from Halalkalibacterium halodurans (strain ATCC BAA-125 / DSM 18197 / FERM 7344 / JCM 9153 / C-125) (Bacillus halodurans).